The sequence spans 1026 residues: SWI/SNF-related matrix-associated actin-dependent regulator of chromatin subfamily A containing DEAD/H box 1 (1026 aa).

N-acetylmethionine is present on methionine 1. Positions methionine 1 to tyrosine 82 are disordered. A compositionally biased stretch (basic and acidic residues) spans aspartate 7 to glutamate 19. At threonine 54 the chain carries Phosphothreonine. Serine 57 is modified (phosphoserine). Threonine 71 bears the Phosphothreonine mark. Lysine 77 is covalently cross-linked (Glycyl lysine isopeptide (Lys-Gly) (interchain with G-Cter in SUMO2)). The residue at position 79 (serine 79) is a Phosphoserine. Residue lysine 84 forms a Glycyl lysine isopeptide (Lys-Gly) (interchain with G-Cter in SUMO2) linkage. 5 positions are modified to phosphoserine: serine 124, serine 127, serine 132, serine 146, and serine 152. Residues leucine 157–glycine 199 form the CUE 1 domain. Disordered regions lie at residues glycine 203–lysine 251 and serine 302–leucine 328. 2 positions are modified to phosphoserine: serine 211 and serine 214. Tyrosine 217 is modified (phosphotyrosine). Positions glutamine 226–glutamate 238 are enriched in basic and acidic residues. 2 positions are modified to phosphoserine: serine 239 and serine 242. A CUE 2 domain is found at lysine 251–glutamate 294. A Phosphoserine modification is found at serine 302. Polar residues predominate over residues serine 314–alanine 323. Residue lysine 335 forms a Glycyl lysine isopeptide (Lys-Gly) (interchain with G-Cter in SUMO2) linkage. Positions valine 354–aspartate 373 are disordered. Lysine 471 participates in a covalent cross-link: Glycyl lysine isopeptide (Lys-Gly) (interchain with G-Cter in SUMO2). Positions alanine 509–histidine 677 constitute a Helicase ATP-binding domain. Alanine 521–threonine 529 provides a ligand contact to ATP. The short motif at aspartate 628–histidine 631 is the DEGH box element. The short motif at arginine 721 to isoleucine 738 is the Nuclear localization signal element. Lysine 724 is covalently cross-linked (Glycyl lysine isopeptide (Lys-Gly) (interchain with G-Cter in SUMO2)). Positions valine 858–glycine 1010 constitute a Helicase C-terminal domain. Position 897–904 (tyrosine 897–threonine 904) interacts with ATP. Residue lysine 996 forms a Glycyl lysine isopeptide (Lys-Gly) (interchain with G-Cter in SUMO2) linkage. The DEGD box signature appears at aspartate 1005–aspartate 1008.

It belongs to the SNF2/RAD54 helicase family. In terms of assembly, binds to DNA preferentially in the vicinity of transcriptional start sites. Interacts with MSH2 and TRIM28. Part of a complex composed of TRIM28, HDAC1, HDAC2 and EHMT2. Interacts with PCNA. As to expression, isoform 1 is expressed ubiquitously. Isoform 3 is expressed mainly in skin and esophagus. Expressed in fibroblasts and keratinocytes (at protein level).

The protein resides in the nucleus. It is found in the chromosome. It carries out the reaction ATP + H2O = ADP + phosphate + H(+). DNA helicase that possesses intrinsic ATP-dependent nucleosome-remodeling activity and is both required for DNA repair and heterochromatin organization. Promotes DNA end resection of double-strand breaks (DSBs) following DNA damage: probably acts by weakening histone DNA interactions in nucleosomes flanking DSBs. Required for the restoration of heterochromatin organization after replication. Acts at replication sites to facilitate the maintenance of heterochromatin by directing H3 and H4 histones deacetylation, H3 'Lys-9' trimethylation (H3K9me3) and restoration of silencing. This chain is SWI/SNF-related matrix-associated actin-dependent regulator of chromatin subfamily A containing DEAD/H box 1, found in Homo sapiens (Human).